The following is a 750-amino-acid chain: Photosystem I P700 chlorophyll a apoprotein A1 (750 aa).

8 consecutive transmembrane segments (helical) span residues 70-93, 156-179, 195-219, 291-309, 346-369, 385-411, 433-455, and 531-549; these read VFSA…FHGA, LYCT…FHYH, LNHH…HVSL, IAHH…GHMY, WHAQ…HHMY, LSLF…IFMV, AIIS…LYIH, and FLVH…LILL. [4Fe-4S] cluster is bound by residues C573 and C582. Transmembrane regions (helical) follow at residues 589-610 and 664-686; these read HVFL…HFSW and LSAY…MFLF. Position 675 (H675) interacts with chlorophyll a'. Chlorophyll a contacts are provided by M683 and Y691. W692 contacts phylloquinone. The helical transmembrane segment at 724–744 threads the bilayer; it reads AVGVTHYLLGGIATTWAFFLA.

Belongs to the PsaA/PsaB family. In terms of assembly, the PsaA/B heterodimer binds the P700 chlorophyll special pair and subsequent electron acceptors. PSI consists of a core antenna complex that captures photons, and an electron transfer chain that converts photonic excitation into a charge separation. The eukaryotic PSI reaction center is composed of at least 11 subunits. The cofactor is P700 is a chlorophyll a/chlorophyll a' dimer, A0 is one or more chlorophyll a, A1 is one or both phylloquinones and FX is a shared 4Fe-4S iron-sulfur center..

The protein resides in the plastid. Its subcellular location is the chloroplast thylakoid membrane. It carries out the reaction reduced [plastocyanin] + hnu + oxidized [2Fe-2S]-[ferredoxin] = oxidized [plastocyanin] + reduced [2Fe-2S]-[ferredoxin]. In terms of biological role, psaA and PsaB bind P700, the primary electron donor of photosystem I (PSI), as well as the electron acceptors A0, A1 and FX. PSI is a plastocyanin-ferredoxin oxidoreductase, converting photonic excitation into a charge separation, which transfers an electron from the donor P700 chlorophyll pair to the spectroscopically characterized acceptors A0, A1, FX, FA and FB in turn. Oxidized P700 is reduced on the lumenal side of the thylakoid membrane by plastocyanin. The polypeptide is Photosystem I P700 chlorophyll a apoprotein A1 (Atropa belladonna (Belladonna)).